The sequence spans 64 residues: Beta-defensin 13 (64 aa).

Positions 1–22 are cleaved as a signal peptide; the sequence is MRIFSLIVAGLVLLIQLYPAWG. 3 disulfide bridges follow: Cys30–Cys57, Cys37–Cys51, and Cys41–Cys58.

The protein belongs to the beta-defensin family. As to expression, expressed in testis and to a lesser extent in epididymis (caput, corpus and cauda). Also weakly expressed in kidneys.

The protein localises to the secreted. Has antibacterial activity. In Mus musculus (Mouse), this protein is Beta-defensin 13 (Defb13).